A 277-amino-acid chain; its full sequence is Probable cyclic nucleotide phosphodiesterase MCR_0369 (277 aa).

Fe cation contacts are provided by Asp17, His19, Asp53, Asn83, His165, His204, and His206. Residues His19, Asp53, and 83-84 (NH) contribute to the AMP site. Residue His206 participates in AMP binding.

This sequence belongs to the cyclic nucleotide phosphodiesterase class-III family. Fe(2+) is required as a cofactor.

This chain is Probable cyclic nucleotide phosphodiesterase MCR_0369, found in Moraxella catarrhalis (strain BBH18).